Reading from the N-terminus, the 915-residue chain is Copper-exporting P-type ATPase (915 aa).

HMA domains are found at residues 11–72 (NHFA…YQGG) and 73–134 (TEQT…YQAI). Residues C22, C25, C84, and C87 each coordinate Cu(+). Residues 142-169 (FAPAASIDEKETDTPDAENSSNTEATEA) are disordered. Positions 158–169 (AENSSNTEATEA) are enriched in polar residues. Positions 172-236 (QTLSLLIKGM…AIQSSGYQAE (65 aa)) constitute an HMA 3 domain. Cu(+) contacts are provided by C183 and C186. The next 7 helical transmembrane spans lie at 265–285 (LGIALGTPLMLWGVFGGNMMI), 293–313 (VWGGIGTICFALLLTAGRHFF), 329–349 (TLVALGTGAAWFYSMLVVAWP), 359–379 (VYFEATAMIIGLISLGHYIET), 474–494 (LVITATGIGAQTMLARIIQMV), 514–534 (VFVPVVVVIAILSAALWYLYG), and 541–561 (YMLVVATTVLIIACPCALGLA). The active-site 4-aspartylphosphate intermediate is D598. Mg(2+)-binding residues include D796 and D800. 2 helical membrane passes run 801-821 (APALALADIGIAMGSGSDVAI) and 865-885 (IPIAAGVLYPAFGFLLSPVVA).

It belongs to the cation transport ATPase (P-type) (TC 3.A.3) family. Type IB subfamily.

The protein localises to the cell membrane. The enzyme catalyses Cu(+)(in) + ATP + H2O = Cu(+)(out) + ADP + phosphate + H(+). Its function is as follows. Involved in copper export. The chain is Copper-exporting P-type ATPase (copA) from Vibrio cholerae serotype O1 (strain ATCC 39315 / El Tor Inaba N16961).